The following is a 172-amino-acid chain: Putative Dresden prostate carcinoma protein 2 (172 aa).

The interval 40–61 (QCEEEEAMTPRPTKARAPLPSA) is disordered.

In terms of tissue distribution, very high expression in prostate and prostate cancer. Faint expression in other tissues.

In Homo sapiens (Human), this protein is Putative Dresden prostate carcinoma protein 2 (HMGN2P46).